Reading from the N-terminus, the 305-residue chain is UDP-3-O-acyl-N-acetylglucosamine deacetylase (305 aa).

Zn(2+) is bound by residues histidine 79, histidine 238, and aspartate 242. Histidine 265 functions as the Proton donor in the catalytic mechanism.

Belongs to the LpxC family. Requires Zn(2+) as cofactor.

The enzyme catalyses a UDP-3-O-[(3R)-3-hydroxyacyl]-N-acetyl-alpha-D-glucosamine + H2O = a UDP-3-O-[(3R)-3-hydroxyacyl]-alpha-D-glucosamine + acetate. Its pathway is glycolipid biosynthesis; lipid IV(A) biosynthesis; lipid IV(A) from (3R)-3-hydroxytetradecanoyl-[acyl-carrier-protein] and UDP-N-acetyl-alpha-D-glucosamine: step 2/6. Its function is as follows. Catalyzes the hydrolysis of UDP-3-O-myristoyl-N-acetylglucosamine to form UDP-3-O-myristoylglucosamine and acetate, the committed step in lipid A biosynthesis. The chain is UDP-3-O-acyl-N-acetylglucosamine deacetylase from Vibrio atlanticus (strain LGP32) (Vibrio splendidus (strain Mel32)).